We begin with the raw amino-acid sequence, 770 residues long: Metabotropic glutamate receptor-like protein F (770 aa).

The signal sequence occupies residues 1–22; it reads MKIKNFIYFLIYFIFLFKVING. The Extracellular portion of the chain corresponds to 23–370; sequence QNKTCKISVL…STVDYPESLK (348 aa). Residues Asn-24, Asn-185, Asn-260, Asn-286, Asn-319, and Asn-344 are each glycosylated (N-linked (GlcNAc...) asparagine). A helical membrane pass occupies residues 371-391; the sequence is IGVTVVSGFCIFLCLISMIIV. Topologically, residues 392–405 are cytoplasmic; sequence IKFKEAKVIKSSSP. Residues 406–426 form a helical membrane-spanning segment; the sequence is IFCLLILFGCIVIFVGCIMFA. The Extracellular segment spans residues 427–442; that stretch reads RSPTDGSCRSRVWLLS. Residues 443 to 463 form a helical membrane-spanning segment; sequence LGYTIFLGNLMVKNWRIWLLF. Residues 464-483 lie on the Cytoplasmic side of the membrane; that stretch reads DNPKLKKRAITNWKLYPWVS. Residues 484–504 traverse the membrane as a helical segment; it reads GIVIIDIVILSIWQALGDIVA. Topologically, residues 505–528 are extracellular; the sequence is ESRTGIDSLTKYEYRNVCASSDQG. A helical membrane pass occupies residues 529 to 549; the sequence is SIALYLLLVFHGLILLVACFI. Over 550–565 the chain is Cytoplasmic; that stretch reads SFKIKVVDIEEFNESK. The helical transmembrane segment at 566–586 threads the bilayer; the sequence is PITTSVYIITFCLFIVIPIMV. The Extracellular segment spans residues 587–594; sequence SSPTVTTQ. A helical transmembrane segment spans residues 595 to 615; that stretch reads TTIICICALITTMLSIILLFG. Residues 616–770 lie on the Cytoplasmic side of the membrane; it reads TKFFKMITVG…GQTEIDSNDV (155 aa). The tract at residues 639–740 is disordered; the sequence is SSHSQRTKSS…EEKQKDEEEI (102 aa). 2 stretches are compositionally biased toward basic and acidic residues: residues 676-693 and 730-740; these read SSEK…KDHM and NEEKQKDEEEI. The stretch at 715 to 760 forms a coiled coil; sequence REQINDNIILENNNDNEEKQKDEEEIKEEKLLVSEIQAKRLSLEQN.

In the N-terminal section; belongs to the BMP lipoprotein family. The protein in the C-terminal section; belongs to the G-protein coupled receptor 3 family. GABA-B receptor subfamily.

The protein resides in the membrane. This chain is Metabotropic glutamate receptor-like protein F (grlF), found in Dictyostelium discoideum (Social amoeba).